Reading from the N-terminus, the 302-residue chain is Protoheme IX farnesyltransferase (302 aa).

9 consecutive transmembrane segments (helical) span residues 24–44 (VVSLVTFTAVTGAVLAYFSGY), 48–68 (FFSVFTAIFCIAVGSGAAGAL), 97–117 (AALVFGLVLFALSVLLMELAV), 120–140 (LSAVLLSVAVFYYSVIYTVYL), 147–167 (NIVVGGGAGAFPPMIGWAAVA), 174–194 (SLVLFLIIFLWTPPHFWALAL), 221–241 (ILCYSVLLFITSILPYLLRFS), 245–265 (YMIVAFILGLVFLYYAINVYL), and 282–302 (FLLFGVFILDAALSTALGMLI).

Belongs to the UbiA prenyltransferase family. Protoheme IX farnesyltransferase subfamily.

It localises to the cell inner membrane. The catalysed reaction is heme b + (2E,6E)-farnesyl diphosphate + H2O = Fe(II)-heme o + diphosphate. It functions in the pathway porphyrin-containing compound metabolism; heme O biosynthesis; heme O from protoheme: step 1/1. Converts heme B (protoheme IX) to heme O by substitution of the vinyl group on carbon 2 of heme B porphyrin ring with a hydroxyethyl farnesyl side group. In Neorickettsia sennetsu (strain ATCC VR-367 / Miyayama) (Ehrlichia sennetsu), this protein is Protoheme IX farnesyltransferase.